We begin with the raw amino-acid sequence, 264 residues long: Thiazole synthase (264 aa).

Catalysis depends on Lys-100, which acts as the Schiff-base intermediate with DXP. 1-deoxy-D-xylulose 5-phosphate-binding positions include Gly-161, 187–188 (AG), and 209–210 (NT).

This sequence belongs to the ThiG family. Homotetramer. Forms heterodimers with either ThiH or ThiS.

It localises to the cytoplasm. The catalysed reaction is [ThiS sulfur-carrier protein]-C-terminal-Gly-aminoethanethioate + 2-iminoacetate + 1-deoxy-D-xylulose 5-phosphate = [ThiS sulfur-carrier protein]-C-terminal Gly-Gly + 2-[(2R,5Z)-2-carboxy-4-methylthiazol-5(2H)-ylidene]ethyl phosphate + 2 H2O + H(+). Its pathway is cofactor biosynthesis; thiamine diphosphate biosynthesis. Its function is as follows. Catalyzes the rearrangement of 1-deoxy-D-xylulose 5-phosphate (DXP) to produce the thiazole phosphate moiety of thiamine. Sulfur is provided by the thiocarboxylate moiety of the carrier protein ThiS. In vitro, sulfur can be provided by H(2)S. This Nitrosospira multiformis (strain ATCC 25196 / NCIMB 11849 / C 71) protein is Thiazole synthase.